The chain runs to 142 residues: Large ribosomal subunit protein uL11 (142 aa).

This sequence belongs to the universal ribosomal protein uL11 family. In terms of assembly, part of the ribosomal stalk of the 50S ribosomal subunit. Interacts with L10 and the large rRNA to form the base of the stalk. L10 forms an elongated spine to which L12 dimers bind in a sequential fashion forming a multimeric L10(L12)X complex. Post-translationally, one or more lysine residues are methylated.

Functionally, forms part of the ribosomal stalk which helps the ribosome interact with GTP-bound translation factors. This is Large ribosomal subunit protein uL11 from Vibrio campbellii (strain ATCC BAA-1116).